Consider the following 95-residue polypeptide: Selenoprotein K (95 aa).

A helical membrane pass occupies residues 20 to 42 (LSFLTDMFWGITDFVVMFFQSII). Positions 47–95 (TRRGCQNSSSSTRYDDGRGPPGHPRRMGRINHGSGPSAPPMAGGGGUGR) are disordered. Selenocysteine 93 is a non-standard amino acid (selenocysteine).

The protein belongs to the selenoprotein K family.

The protein localises to the endoplasmic reticulum membrane. It is found in the cell membrane. Functionally, required for Ca(2+) flux in immune cells and plays a role in T-cell proliferation and in T-cell and neutrophil migration. Involved in endoplasmic reticulum-associated degradation (ERAD) of soluble glycosylated proteins. Required for cell surface expression of CD36 and involved in macrophage uptake of low-density lipoprotein and in foam cell formation. Required for palmitoylation. This chain is Selenoprotein K (selenok), found in Xenopus laevis (African clawed frog).